We begin with the raw amino-acid sequence, 1309 residues long: Phospholipase A I (1309 aa).

LRR repeat units lie at residues 155–178, 180–201, 203–223, and 224–248; these read LPLL…IGKL, NLKI…LRQC, GLVE…DFRA, and MAGL…PLHQ. ARM repeat units lie at residues 315–356, 401–439, and 440–481; these read DEGN…SLAR, SVSQ…NLAF, and CLEN…ILGE. In terms of domain architecture, PNPLA spans 502 to 746; it reads LTMDGGGMKG…VANNPTIFAI (245 aa). Positions 506–511 match the GXGXXG motif; it reads GGGMKG. A GXSXG motif is present at residues 538 to 542; it reads GTSTG. The Nucleophile role is filled by Ser-540. The active-site Proton acceptor is Asp-733. Residues 733–735 carry the DGA/G motif; that stretch reads DGA. The segment at 1183–1253 is disordered; the sequence is VIGPSNEPQE…EDSDHEKTNR (71 aa). Residues 1188-1208 show a composition bias toward polar residues; the sequence is NEPQETPLITSQGSSEYNIGD. Residues 1216–1235 are compositionally biased toward acidic residues; that stretch reads GEEEDEDEEVNEETEREEME.

This sequence belongs to the patatin family.

The protein resides in the plastid. It localises to the chloroplast. Possesses non-specific lipolytic acyl hydrolase (LAH) activity. Catalyzes the hydrolysis of the galactolipids monogalactosyldiacylglycerol (MGDG) and digalactosyldiacylglycerol (DGDG), and less efficiently the phoshpolipids phosphatidylcholine (PC), phosphatidylethanolamine (PE), phosphatidylglycerol (PG), phosphatidylserine (PS) and phosphatidylinositol (PI). Hydrolyzes phospholipids at both the sn-1 and sn-2 positions. Involved in basal jasmonic acid production and promotes resistance to the necrotrophic fungal pathogen Botrytis cinerea. The polypeptide is Phospholipase A I (PLA1) (Arabidopsis thaliana (Mouse-ear cress)).